The chain runs to 382 residues: Caspase-1-B (382 aa).

Positions 1-98 are excised as a propeptide; the sequence is MTAQLNKVRK…HEHAPSPIQE (98 aa). Active-site residues include histidine 216 and cysteine 270. The propeptide occupies 283-292; the sequence is DVAPAPLEDD.

This sequence belongs to the peptidase C14A family. As to quaternary structure, heterotetramer that consists of two anti-parallel arranged heterodimers, each one formed by a 20 kDa (Caspase-1 subunit p20) and a 10 kDa (Caspase-1 subunit p10) subunit. Heterotetramer that consists of two anti-parallel arranged heterodimers, each one formed by a 20 kDa (Caspase-1 subunit p20) and a 10 kDa (Caspase-1 subunit p10) subunit. Can form a heterodimer with isoform epsilon which then has an inhibitory effect. The two subunits are derived from the precursor sequence by an autocatalytic mechanism.

It is found in the cytoplasm. The protein localises to the cell membrane. The catalysed reaction is Strict requirement for an Asp residue at position P1 and has a preferred cleavage sequence of Tyr-Val-Ala-Asp-|-.. Functionally, thiol protease involved in a variety of inflammatory processes by proteolytically cleaving other proteins, such as the precursors of the inflammatory cytokines interleukin-1 beta (IL1B) and interleukin 18 (IL18) as well as the pyroptosis inducer Gasdermin-D (GSDMD), into active mature peptides. Plays a key role in cell immunity as an inflammatory response initiator: once activated through formation of an inflammasome complex, it initiates a pro-inflammatory response through the cleavage of the two inflammatory cytokines IL1B and IL18, releasing the mature cytokines which are involved in a variety of inflammatory processes. Cleaves a tetrapeptide after an Asp residue at position P1. Also initiates pyroptosis, a programmed lytic cell death pathway, through cleavage of GSDMD. This is Caspase-1-B (casp1-b) from Xenopus laevis (African clawed frog).